The chain runs to 107 residues: Large ribosomal subunit protein uL18c (107 aa).

The protein belongs to the universal ribosomal protein uL18 family. Part of the 50S ribosomal subunit; contacts the 5S rRNA.

The protein resides in the plastid. It is found in the chloroplast. Its function is as follows. Binds 5S rRNA, forms part of the central protuberance of the 50S subunit. This is Large ribosomal subunit protein uL18c (rpl18) from Guillardia theta (Cryptophyte).